A 301-amino-acid chain; its full sequence is Probable protein phosphatase 2C 4 (301 aa).

Residues 1–18 show a composition bias toward polar residues; it reads MGPYLSQPNKNKTTTSGE. A disordered region spans residues 1-20; the sequence is MGPYLSQPNKNKTTTSGEGK. One can recognise a PPM-type phosphatase domain in the interval 23–298; sequence IFAASEMQGW…DNMTTLIIYL (276 aa). Mn(2+) is bound by residues Asp-57, Gly-58, Asp-237, and Asp-289.

It belongs to the PP2C family. Requires Mg(2+) as cofactor. The cofactor is Mn(2+).

It localises to the membrane. It catalyses the reaction O-phospho-L-seryl-[protein] + H2O = L-seryl-[protein] + phosphate. The enzyme catalyses O-phospho-L-threonyl-[protein] + H2O = L-threonyl-[protein] + phosphate. Its function is as follows. Enzyme with a broad specificity. This Paramecium tetraurelia protein is Probable protein phosphatase 2C 4.